We begin with the raw amino-acid sequence, 94 residues long: Small ribosomal subunit protein uS19 (94 aa).

This sequence belongs to the universal ribosomal protein uS19 family.

Protein S19 forms a complex with S13 that binds strongly to the 16S ribosomal RNA. This chain is Small ribosomal subunit protein uS19, found in Caldicellulosiruptor saccharolyticus (strain ATCC 43494 / DSM 8903 / Tp8T 6331).